Consider the following 565-residue polypeptide: uncharacterized protein (565 aa).

The first 21 residues, 1 to 21 (MKIPSQQVLLALPLLASPAQS), serve as a signal peptide directing secretion. N-linked (GlcNAc...) asparagine glycosylation is found at asparagine 46 and asparagine 88. In terms of domain architecture, FAD-binding PCMH-type spans 118–302 (QGIVPYYSVS…TSVTYKTHPK (185 aa)). A Pros-8alpha-FAD histidine modification is found at histidine 155. Asparagine 191, asparagine 314, asparagine 364, asparagine 371, and asparagine 484 each carry an N-linked (GlcNAc...) asparagine glycan.

The protein belongs to the oxygen-dependent FAD-linked oxidoreductase family. The cofactor is FAD.

The protein resides in the secreted. This is an uncharacterized protein from Arthroderma benhamiae (strain ATCC MYA-4681 / CBS 112371) (Trichophyton mentagrophytes).